The chain runs to 584 residues: BEL1-like homeodomain protein 8 (584 aa).

The tract at residues serine 266–serine 282 is SR/KY domain. A disordered region spans residues glutamate 292–glutamate 317. Positions serine 295–asparagine 305 are enriched in acidic residues. The interval leucine 316–valine 387 is BELL domain. Residues isoleucine 424–methionine 486 constitute a DNA-binding region (homeobox). The disordered stretch occupies residues threonine 503–serine 529.

It belongs to the TALE/BELL homeobox family. In terms of assembly, may form heterodimeric complex with the TALE/KNOX proteins STM and KNAT1/BP.

The protein localises to the nucleus. Required for specifying floral primordia and establishing early internode patterning events during inflorescence development. This Arabidopsis thaliana (Mouse-ear cress) protein is BEL1-like homeodomain protein 8 (BLH8).